The sequence spans 314 residues: Inosine-uridine preferring nucleoside hydrolase (314 aa).

Residue Asp10 coordinates Ca(2+). Asp14 is a binding site for substrate. Ca(2+) contacts are provided by Asp15 and Thr126. The substrate site is built by Asn160, Glu166, and Asn168. His240 acts as the Proton donor in catalysis. Residue Asp241 coordinates Ca(2+).

The protein belongs to the IUNH family. As to quaternary structure, homotetramer. Ca(2+) serves as cofactor.

The enzyme catalyses inosine + H2O = hypoxanthine + D-ribose. It carries out the reaction uridine + H2O = D-ribose + uracil. It functions in the pathway purine metabolism; purine nucleoside salvage. Is potently inhibited by immucillin A and immucillin ACAP, which are transition state inhibitors. Functionally, catalyzes the hydrolysis of the N-glycosidic bond of all of the commonly occurring purine and pyrimidine nucleosides into ribose and the associated base, but has a preference for inosine and uridine as substrates. Likely functions in purine salvage from the host, a fundamental pathway since protozoan parasites such as L.major are incapable of de novo purine biosynthesis. The polypeptide is Inosine-uridine preferring nucleoside hydrolase (NSNH) (Leishmania major).